A 437-amino-acid polypeptide reads, in one-letter code: Minor capsid protein p49 (437 aa).

The protein belongs to the asfivirus p49 structural protein family.

It localises to the virion. In terms of biological role, together with the penton and the other minor capsid proteins (M1249L, p17), forms a complicated network immediately below the outer capsid shell, stabilizing the whole capsid. Plays an essential role in the formation of infectious virus particles. Especially required for the formation of the capsid vertices. During virion assembly, associates with the membrane and probably mediates the docking of the penton complex to the inner membrane, where it recruits the capsomers to form the penton core. The sequence is that of Minor capsid protein p49 from Ornithodoros (relapsing fever ticks).